A 417-amino-acid chain; its full sequence is Gamma-glutamyl phosphate reductase (417 aa).

The protein belongs to the gamma-glutamyl phosphate reductase family.

The protein localises to the cytoplasm. The enzyme catalyses L-glutamate 5-semialdehyde + phosphate + NADP(+) = L-glutamyl 5-phosphate + NADPH + H(+). It functions in the pathway amino-acid biosynthesis; L-proline biosynthesis; L-glutamate 5-semialdehyde from L-glutamate: step 2/2. Functionally, catalyzes the NADPH-dependent reduction of L-glutamate 5-phosphate into L-glutamate 5-semialdehyde and phosphate. The product spontaneously undergoes cyclization to form 1-pyrroline-5-carboxylate. In Meiothermus ruber, this protein is Gamma-glutamyl phosphate reductase.